The chain runs to 311 residues: Retinol dehydrogenase 8 (311 aa).

An NADP(+)-binding site is contributed by 9–18 (LISGCSSGIG). Helical transmembrane passes span 86-106 (VLVN…SLAA), 137-157 (IVVI…VYAA), and 169-189 (LAIQ…GPVV). Ser142 is a substrate binding site. Residue Tyr155 is the Proton acceptor of the active site.

The protein belongs to the short-chain dehydrogenases/reductases (SDR) family. In terms of tissue distribution, detected in photoreceptor outer segments in the retina (at protein level).

The protein resides in the membrane. The catalysed reaction is all-trans-retinol + NADP(+) = all-trans-retinal + NADPH + H(+). Its function is as follows. Retinol dehydrogenase with a clear preference for NADP. Converts all-trans-retinal to all-trans-retinol. May play a role in the regeneration of visual pigment at high light intensity. The polypeptide is Retinol dehydrogenase 8 (RDH8) (Homo sapiens (Human)).